Reading from the N-terminus, the 331-residue chain is LIM/homeobox protein Lhx9 (331 aa).

LIM zinc-binding domains lie at 71 to 132 (TLCA…FSVK) and 133 to 194 (RCAR…LVQG). Residues 253-275 (ETDLDRDQTYPPSQKTKRMRTSF) form a disordered region. A DNA-binding region (homeobox) is located at residues 268-327 (TKRMRTSFKHHQLRTMKSYFAINHNPDAKDLKQLAQKTGLTKRVLQGEQCSGFNSHTTRR).

It is found in the nucleus. Functionally, may be involved in gonadal development. This is LIM/homeobox protein Lhx9 (lhx9) from Xenopus laevis (African clawed frog).